A 479-amino-acid chain; its full sequence is Ribulose bisphosphate carboxylase large chain (479 aa).

The propeptide occupies 1–2 (MS). Residues asparagine 123 and threonine 173 each contribute to the substrate site. Lysine 175 (proton acceptor) is an active-site residue. Residue lysine 177 participates in substrate binding. 3 residues coordinate Mg(2+): lysine 201, aspartate 203, and glutamate 204. Lysine 201 bears the N6-carboxylysine mark. Serine 208 is modified (phosphoserine). Catalysis depends on histidine 294, which acts as the Proton acceptor. Arginine 295 and histidine 327 together coordinate substrate. Position 330 is a phosphothreonine (threonine 330). Position 379 (serine 379) interacts with substrate.

The protein belongs to the RuBisCO large chain family. Type I subfamily. Heterohexadecamer of 8 large chains and 8 small chains; disulfide-linked. The disulfide link is formed within the large subunit homodimers. Requires Mg(2+) as cofactor. The disulfide bond which can form in the large chain dimeric partners within the hexadecamer appears to be associated with oxidative stress and protein turnover.

The protein resides in the plastid. Its subcellular location is the chloroplast. The catalysed reaction is 2 (2R)-3-phosphoglycerate + 2 H(+) = D-ribulose 1,5-bisphosphate + CO2 + H2O. It catalyses the reaction D-ribulose 1,5-bisphosphate + O2 = 2-phosphoglycolate + (2R)-3-phosphoglycerate + 2 H(+). Functionally, ruBisCO catalyzes two reactions: the carboxylation of D-ribulose 1,5-bisphosphate, the primary event in carbon dioxide fixation, as well as the oxidative fragmentation of the pentose substrate in the photorespiration process. Both reactions occur simultaneously and in competition at the same active site. The polypeptide is Ribulose bisphosphate carboxylase large chain (Brassica oleracea (Wild cabbage)).